Reading from the N-terminus, the 495-residue chain is NADH-ubiquinone oxidoreductase chain 4 (495 aa).

15 helical membrane passes run 9-29 (YFDL…LLFI), 39-59 (LIGL…WIQF), 89-109 (LSLF…LVGW), 118-138 (EYII…CMLD), 139-159 (LLLF…IIGV), 173-193 (FFLY…LILL), 214-234 (ILLW…VPVH), 245-265 (PTAG…YGFL), 272-292 (FPEA…IAII), 313-333 (VAHM…GIGG), 335-355 (ILLM…VGVL), 367-387 (YGGL…FTLA), 388-408 (NMSL…VGAF), 413-433 (LVAT…LWLY), and 457-477 (VFIF…PKVF).

Belongs to the complex I subunit 4 family.

It localises to the mitochondrion membrane. The catalysed reaction is a ubiquinone + NADH + 5 H(+)(in) = a ubiquinol + NAD(+) + 4 H(+)(out). Its function is as follows. Core subunit of the mitochondrial membrane respiratory chain NADH dehydrogenase (Complex I) that is believed to belong to the minimal assembly required for catalysis. Complex I functions in the transfer of electrons from NADH to the respiratory chain. The immediate electron acceptor for the enzyme is believed to be ubiquinone. The polypeptide is NADH-ubiquinone oxidoreductase chain 4 (ND4) (Triticum aestivum (Wheat)).